A 127-amino-acid polypeptide reads, in one-letter code: Cystatin cpi-1 (127 aa).

Positions 1-19 (MFFPIVWLSVLLIISKSFA) are cleaved as a signal peptide. Positions 68–72 (QVVAG) match the Secondary area of contact motif. A disulfide bridge links C86 with C98.

The protein belongs to the cystatin family.

In terms of biological role, cysteine protease inhibitor which inhibits members of the peptidase C1 family. Does not inhibit asparaginyl endopeptidase. In Brugia malayi (Filarial nematode worm), this protein is Cystatin cpi-1.